The sequence spans 445 residues: Phosphoglucosamine mutase (445 aa).

The active-site Phosphoserine intermediate is Ser-102. The Mg(2+) site is built by Ser-102, Asp-241, Asp-243, and Asp-245. Ser-102 is subject to Phosphoserine.

Belongs to the phosphohexose mutase family. Requires Mg(2+) as cofactor. Activated by phosphorylation.

It carries out the reaction alpha-D-glucosamine 1-phosphate = D-glucosamine 6-phosphate. Functionally, catalyzes the conversion of glucosamine-6-phosphate to glucosamine-1-phosphate. The chain is Phosphoglucosamine mutase from Rhodococcus opacus (strain B4).